A 96-amino-acid polypeptide reads, in one-letter code: Pro-glucagon (96 aa).

Composition is skewed to basic and acidic residues over residues 1–12 and 19–30; these read LQDAEDSSRFDA and EARELSTPKXHS. Residues 1-35 are disordered; it reads LQDAEDSSRFDADDTLAGEARELSTPKXHSEGTFS.

Belongs to the glucagon family.

It is found in the secreted. Plays a key role in glucose metabolism and homeostasis. Regulates blood glucose by increasing gluconeogenesis and decreasing glycolysis. The protein is Pro-glucagon (gcg) of Myoxocephalus scorpius (Shorthorn sculpin).